A 96-amino-acid chain; its full sequence is ATP synthase subunit c (96 aa).

A run of 2 helical transmembrane segments spans residues 26-46 (GLVL…CGIG) and 68-88 (IMVT…YALV).

The protein belongs to the ATPase C chain family. In terms of assembly, F-type ATPases have 2 components, F(1) - the catalytic core - and F(0) - the membrane proton channel. F(1) has five subunits: alpha(3), beta(3), gamma(1), delta(1), epsilon(1). F(0) has three main subunits: a(1), b(2) and c(10-14). The alpha and beta chains form an alternating ring which encloses part of the gamma chain. F(1) is attached to F(0) by a central stalk formed by the gamma and epsilon chains, while a peripheral stalk is formed by the delta and b chains.

It is found in the cell inner membrane. F(1)F(0) ATP synthase produces ATP from ADP in the presence of a proton or sodium gradient. F-type ATPases consist of two structural domains, F(1) containing the extramembraneous catalytic core and F(0) containing the membrane proton channel, linked together by a central stalk and a peripheral stalk. During catalysis, ATP synthesis in the catalytic domain of F(1) is coupled via a rotary mechanism of the central stalk subunits to proton translocation. Its function is as follows. Key component of the F(0) channel; it plays a direct role in translocation across the membrane. A homomeric c-ring of between 10-14 subunits forms the central stalk rotor element with the F(1) delta and epsilon subunits. This is ATP synthase subunit c from Oleidesulfovibrio alaskensis (strain ATCC BAA-1058 / DSM 17464 / G20) (Desulfovibrio alaskensis).